The following is a 3122-amino-acid chain: MFSVRIVTADYYMASPLPGLDTCQSPLTQLPVKKVPVVRVFGATPAGQKTCLHLHGIFPYLYVPYDGYGQQPESYLSQMAFSIDRALNVALGNPSSTAQHVFKVSLVSGMPFYGYHEKERHFMKIYLYNPAMVKRICELLQSGAIMNKCYQPHEAHIPYLLQLFIDYNLYGMNLINLAAVKFRKARRKGNASHATGLFKHQLSGNSPAGTLFRWEEDEIPSSLLLEGVEPLSTCELEVDAVAADILNRLDIEAQIGGNPGLQAIWEDEKQRRRNRNESSQISQPESQDCRFVPATESEKQFQKRLQEVLKQNDFSVTLSGSVDYSNGSQEFSAELTLHSEILSPEMLPCSPANMIEVHKDTDLSKGNTKHKVEEALINEEAILNLIENSQTFQPLTQRLSETPVFMGSSPDESLVHLLAGLESDGYQGEKNRMPLPCHSFGESQNPQNSDDEENEPQIEKEEMELSVVMSQRWDSDIEEHCAKKRSLCRNAHRSSTEEDDSSSEEEMEWTDNSLLFANLSIPQLDGTADENSDNPLNNENSRAHSSVIATSKLSVRPSIFHKDAATLEPPSSAKITFQCKHTSALSSHVLNKDGLTEDLSQPNSTEKGRDNSVTFTKESTYSMKYSGSLSSTVHSDNSHKEICKKDKSLPVSSCESSVFDYEEDIPSVTRQVPSRKYSNMRKIEKDASCIHVNRHISETILGKNSFNFADLNHSKRKLSSEGNEKGNSTSLSGVFPSSLTENCDLLPSSGENRSMAHSLESITDESGLNKLKIRYEEFQEHKMEKPSLSQQAAHYMFFPSVVLSNCLTRPQKLSPVTYKLQSGNKPSRLKLNKKKLIGLQETSTKSTETGATKDSCTHNDLYTGASEKENGLSSDSAKATHGTFENKPPTEHFIDCHFGDGSLEAEQSFGLYGNKYTLRAKRKVNYETEDSESSFVTQNSKISLPHPMEIGENLDGTLKSRKRRKMSKKLPPVIIKYIIINRFRGRKNMLVKLGKIDSKEKQVILTEEKMELYKKLAPLKDFWPKVPDSPATKYPIYPLTPKKSHRRKSKHKSAKKKPGKQHRTNSENIKRTLSFRKKRTHAVLSPPSPSYIAETEDCDLSYSDVMSKLGFLSERSTSPINSSPPRCWSPTDPRAEEIMAAAEKESMLFKGPNVYNTKTVSPRVGKASRARAQVKKSKARLANSSVVTNKRNKRNQTTKLVDDGKKKPRAKQKQRANEKSLSRKHAIPADEKMKPHSEAELTPNHQSVSELTSSSGAQALSKQKEMSQTGPAVDHPLPPAQPTGISAQQRLSNCFSSFLESKKSVDLRTFPSSRDDSHSSVVYSSIGPGISKINIQRSHNQSAMFTRKETTLIQKSIFDLSNHLSQVAQSTQVCSGIISPKTEESSSTQKNCGSSMGKLNEYRSSLESKPEQVCAPNFLHCKDSQQQTVSVSEQSKTSETCSPGNAASEESQTPNCFVTSLKSPIKQIAWEQKQRGFILDMSNFKPEKVKQRSLSEAISQTKALSQCKNQNVSTPSVFGEGQSGLAVLKELLQKRQQKAQSTNVVQDSTSTHQPDKNISVSNEHKKANKRTRPVTSPRKPRTPRRTKPKEQTPRRLKVDPLNLQTSGHLDNSLSDDSPILFSDPGFESCYSLEDSLSPEHNYNFDINTIGQTGFCSFYSGSQFVPADQNLPQKFLSDAVQDLFPGQAIDKSELLSHDRQSCSEEKHHVSDSSPWIRASTLNPELFEKVAMDNNENHRHSQWKNSFHPLTSHSNSIMESFCVQQAENCLTEKSRLNRSSVSKEVFLSLPQANSSDWIQGHNRKEADQSLHSANTSFTTILSSPDGELVDAASEDLELYVSRNNDVLTPTPDSSPRSTSSPLQSKNGSFTPRTAHILKPLMSPPSREEIVATLLDHDLSEAIYQEPFCSNPSDVPEKPREIGGRLLMVETRLPNDLIEFEGDFSLEGLRLWKTAFSAMTQNPRPGSPLRNGQAVVNKESSNSHKMVEDKKIVIMPCKYAPSRQLVQAWLQAKEEYERSKKLPKTELTPVTKSAENVSPSLNPGDTCAVSPQVDKCPHTLSSSAHTKEEVSKSQIALQTSTTGCSQTLLAAASAAVPEEDEDDNDNCYVSYSSPDSPGIPPWQQAASPDFRSLNGDDRHSSPGKELCSLAVENFLKPIKDGIQKSSCSESWEPQVISPIHARARTGKWDPLCLHSTPVMQRKFLEKLPEATGLSPLSVEPKTQKLYNKKGSDADGLRRVLLTTQVENQFAAVNTPKKETSQIDGPSLNNTYGFKVSIQNLQEAKALHEIQNLTLISVELHARTRRDLQPDPEFDPICALFYCISSDTPLPDTEKTELTGVIVIDKDKTVTHQDIRSQTPLLIRSGITGLEVTYAADEKALFQEITNIIKRYDPDILLGYEIQMHSWGYLLQRAAALSVDLCQMISRVPDDKIENRFAAERDDYGSDTMSEINIVGRITLNLWRIMRNEVALTNYTFENVSFHVLHQRFPLFTFRVLSDWFDNKTDLYRWKMVDHYVSRVRGNLQMLEQLDLIGKTSEMARLFGIQFLHVLTRGSQYRVESMMLRIAKPMNYIPVTPSIQQRSQMRAPQCVPLIMEPESRFYSNSVLVLDFQSLYPSIVIAYNYCFSTCLGHVENLGKYDEFKFGCTSLRVPPDLLYQIRHDVTVSPNGVAFVKPSVRKGVLPRMLEEILKTRLMVKQSMKSYKQDRALSRMLNARQLGLKLIANVTFGYTAANFSGRMPCIEVGDSIVHKARETLERAIKLVNDTKKWGARVVYGDTDSMFVLLKGATKEQSFKIGQEIAEAVTATNPRPVKLKFEKVYLPCVLQTKKRYVGYMYETLDQKEPVFDAKGIETVRRDSCPAVSKILERSLKLLFETRDISLIKQYVQRQCMKLVEGKASIQDFIFAKEYRGSFSYRPGACVPALELTRKMLAYDRRSEPRVGERVPYVIIYGTPGLPLIQLIRRPAEVLQDPTLRLNATYYITKQILPPLARIFSLIGIDVFSWYQELPRIQKATSSSRSELEGRKGTISQYFTTLHCPVCDDLTQHGICSKCRSQPQHVAIILNQEIRELERKQEQLIKICRNCTGSFDRHIPCVSLNCPVLFKLSRVNRELSKAPYLRQLLDQF.

Disordered regions lie at residues 270–289 (QRRR…SQDC), 425–457 (GYQG…NEPQ), 487–509 (LCRN…EMEW), 524–545 (LDGT…RAHS), and 842–886 (TSTK…TFEN). Residues 277–286 (ESSQISQPES) show a composition bias toward polar residues. A compositionally biased stretch (acidic residues) spans 497-509 (EEDDSSSEEEMEW). 2 stretches are compositionally biased toward polar residues: residues 533 to 545 (DNPL…RAHS) and 842 to 860 (TSTK…THND). A Phosphoserine modification is found at S1029. Disordered regions lie at residues 1034–1075 (YPIY…TLSF), 1154–1285 (VYNT…PTGI), 1429–1453 (VSVS…ESQT), 1538–1616 (KAQS…LSDD), 1842–1869 (NDVL…SFTP), 1959–1979 (NPRP…ESSN), and 2091–2138 (AAVP…RHSS). Residue T1040 is modified to Phosphothreonine. 2 stretches are compositionally biased toward basic residues: residues 1042 to 1063 (KKSH…KQHR) and 1166 to 1179 (KASR…KSKA). The segment covering 1215 to 1239 (RANEKSLSRKHAIPADEKMKPHSEA) has biased composition (basic and acidic residues). Over residues 1243–1270 (PNHQSVSELTSSSGAQALSKQKEMSQTG) the composition is skewed to polar residues. Residues 1429 to 1440 (VSVSEQSKTSET) show a composition bias toward low complexity. Polar residues-rich tracts occupy residues 1441 to 1453 (CSPG…ESQT) and 1538 to 1561 (KAQS…ISVS). Over residues 1566–1587 (KANKRTRPVTSPRKPRTPRRTK) the composition is skewed to basic residues. Positions 1588 to 1598 (PKEQTPRRLKV) are enriched in basic and acidic residues. The span at 1602-1615 (NLQTSGHLDNSLSD) shows a compositional bias: polar residues. Residues 1844–1895 (VLTPTPDSSPRSTSSPLQSKNGSFTPRTAHILKPLMSPPSREEIVATLLDHD) form a mediates interaction with MAD2L2 region. Over residues 1846–1859 (TPTPDSSPRSTSSP) the composition is skewed to low complexity. Polar residues predominate over residues 1860-1869 (LQSKNGSFTP). S1964 carries the phosphoserine modification. Zn(2+) is bound by residues C3034, C3037, C3046, and C3049. Residues 3034 to 3049 (CPVCDDLTQHGICSKC) form a CysA-type zinc finger. [4Fe-4S] cluster is bound by residues C3078, C3081, C3091, and C3096. Positions 3078–3096 (CRNCTGSFDRHIPCVSLNC) match the CysB motif motif.

This sequence belongs to the DNA polymerase type-B family. In terms of assembly, heterodimer with MAD2L2. This dimer forms the minimal DNA polymerase zeta complex (Pol-zeta2), with REV3L bearing DNA polymerase catalytic activity, although its activity is very low in this context. Component of the tetrameric Pol-zeta complex (Pol-zeta4), which consists of REV3L, MAD2L2, POLD2 and POLD3; Pol-zeta4 is the fully active form of DNA polymerase zeta. [4Fe-4S] cluster serves as cofactor.

Its subcellular location is the nucleus. The enzyme catalyses DNA(n) + a 2'-deoxyribonucleoside 5'-triphosphate = DNA(n+1) + diphosphate. In terms of biological role, catalytic subunit of the DNA polymerase zeta complex, an error-prone polymerase specialized in translesion DNA synthesis (TLS). Lacks an intrinsic 3'-5' exonuclease activity and thus has no proofreading function. The polypeptide is DNA polymerase zeta catalytic subunit (Rev3l) (Mus musculus (Mouse)).